The sequence spans 286 residues: Elongation factor Ts (286 aa).

The interval 82–85 (TDFV) is involved in Mg(2+) ion dislocation from EF-Tu.

It belongs to the EF-Ts family.

The protein resides in the cytoplasm. Its function is as follows. Associates with the EF-Tu.GDP complex and induces the exchange of GDP to GTP. It remains bound to the aminoacyl-tRNA.EF-Tu.GTP complex up to the GTP hydrolysis stage on the ribosome. This is Elongation factor Ts from Hamiltonella defensa subsp. Acyrthosiphon pisum (strain 5AT).